The chain runs to 183 residues: Putative manganese efflux pump MntP (183 aa).

6 consecutive transmembrane segments (helical) span residues 8–28 (IIAL…VALG), 40–60 (FYIG…GMAV), 72–92 (ATYA…IASF), 108–128 (LFFA…LGIF), 133–153 (MVTI…GLFV), and 163–183 (SYSE…LLFL).

Belongs to the MntP (TC 9.B.29) family.

The protein localises to the cell membrane. Its function is as follows. Probably functions as a manganese efflux pump. The protein is Putative manganese efflux pump MntP of Geobacillus kaustophilus (strain HTA426).